Here is a 421-residue protein sequence, read N- to C-terminus: Tyrosine--tRNA ligase 1 (421 aa).

Position 35 (Tyr35) interacts with L-tyrosine. The 'HIGH' region motif lies at Pro40–His49. Residues Tyr170 and Gln174 each contribute to the L-tyrosine site. The short motif at Lys231 to Thr235 is the 'KMSKS' region element. An ATP-binding site is contributed by Lys234. Residues Leu354–Tyr420 enclose the S4 RNA-binding domain.

This sequence belongs to the class-I aminoacyl-tRNA synthetase family. TyrS type 1 subfamily. Homodimer.

It is found in the cytoplasm. The catalysed reaction is tRNA(Tyr) + L-tyrosine + ATP = L-tyrosyl-tRNA(Tyr) + AMP + diphosphate + H(+). In terms of biological role, catalyzes the attachment of tyrosine to tRNA(Tyr) in a two-step reaction: tyrosine is first activated by ATP to form Tyr-AMP and then transferred to the acceptor end of tRNA(Tyr). The protein is Tyrosine--tRNA ligase 1 of Bacillus licheniformis (strain ATCC 14580 / DSM 13 / JCM 2505 / CCUG 7422 / NBRC 12200 / NCIMB 9375 / NCTC 10341 / NRRL NRS-1264 / Gibson 46).